Consider the following 365-residue polypeptide: Glycolaldehyde reductase (365 aa).

The NAD(+) site is built by D37, G94, K95, T116, S119, S125, L127, and Y131. Positions 171, 254, and 271 each coordinate Zn(2+).

This sequence belongs to the iron-containing alcohol dehydrogenase family. Zn(2+) serves as cofactor.

The enzyme catalyses ethylene glycol + NAD(+) = glycolaldehyde + NADH + H(+). Its activity is regulated as follows. Is subject to substrate inhibition. Oxidoreductase involved in the non-carboxylating pentose bisphosphate pathway, a nucleoside degradation pathway present in some halophilic archaea. Catalyzes the reduction of glycolaldehyde to ethylene glycol. Cannot catalyze the oxidation of glycerol 1-phosphate nor the reduction of dihydroxyacetone phosphate (DHAP). In Halobacterium salinarum (strain ATCC 700922 / JCM 11081 / NRC-1) (Halobacterium halobium), this protein is Glycolaldehyde reductase.